The following is a 612-amino-acid chain: DNA damage checkpoint protein 1 (612 aa).

Serine 436 is modified (phosphoserine). The tract at residues 576 to 612 (GLLNSQNDTSNHKKQDNKEMEDGLGLTQVEKPRGIFD) is disordered. The segment covering 585 to 596 (SNHKKQDNKEME) has biased composition (basic and acidic residues).

This sequence belongs to the DDC1 family. As to quaternary structure, component of the checkpoint clamp complex composed of DDC1, MEC3 and RAD17. The interaction with MEC3 is performed in a RAD17-dependent manner. The checkpoint clamp complex loads onto DNA in an ATP-dependent manner through its interaction with the RFC-RAD4 checkpoint clamp loader complex. Interacts with the DNA polymerase zeta subunit REV7 and DPB11. Phosphorylated during cell cycle S-phase and in response to DNA damage. This phosphorylation is MEC14 dependent. Also hosphorylated by CDC28.

It localises to the cytoplasm. The protein resides in the nucleus. In terms of biological role, component of the checkpoint clamp complex involved in the surveillance mechanism that allows the DNA repair pathways to act to restore the integrity of the DNA prior to DNA synthesis or separation of the replicated chromosomes. Associates with sites of DNA damage and modulates the MEC1 signaling pathway and the activation of RAD53 in response to DNA damage at phase G1. The complex also physically regulates DNA polymerase zeta-dependent mutagenesis by controlling the access of polymerase zeta to damaged DNA. The chain is DNA damage checkpoint protein 1 (DDC1) from Saccharomyces cerevisiae (strain ATCC 204508 / S288c) (Baker's yeast).